The primary structure comprises 304 residues: GDP-6-deoxy-D-mannose reductase (304 aa).

Residues 13–14 and 39–40 contribute to the NADP(+) site; these read FV and DL. Residue 105-106 coordinates substrate; sequence SG. NADP(+) is bound at residue Y131. Substrate-binding positions include N160, R200, and 260–263; that span reads RRAE.

It belongs to the NAD(P)-dependent epimerase/dehydratase family. GDP-6-deoxy-D-mannose reductase subfamily.

The enzyme catalyses GDP-alpha-D-rhamnose + NAD(+) = GDP-4-dehydro-alpha-D-rhamnose + NADH + H(+). It carries out the reaction GDP-alpha-D-rhamnose + NADP(+) = GDP-4-dehydro-alpha-D-rhamnose + NADPH + H(+). Functionally, reductase that catalyzes the conversion of GDP-6-deoxy-D-mannose to GDP-4-dehydro-6-deoxy-D-mannose (GDP-D-rhamnose). The sequence is that of GDP-6-deoxy-D-mannose reductase (rmd) from Pseudomonas aeruginosa (strain ATCC 15692 / DSM 22644 / CIP 104116 / JCM 14847 / LMG 12228 / 1C / PRS 101 / PAO1).